A 93-amino-acid chain; its full sequence is Large ribosomal subunit protein bL27 (93 aa).

Positions 1 to 9 are excised as a propeptide; sequence MLRLDLQFF.

The protein belongs to the bacterial ribosomal protein bL27 family. The N-terminus is cleaved by ribosomal processing cysteine protease Prp.

The polypeptide is Large ribosomal subunit protein bL27 (Bacillus licheniformis (strain ATCC 14580 / DSM 13 / JCM 2505 / CCUG 7422 / NBRC 12200 / NCIMB 9375 / NCTC 10341 / NRRL NRS-1264 / Gibson 46)).